We begin with the raw amino-acid sequence, 158 residues long: MINGVYYNEISRDLDISSSTQCLRFLKETVIPSLANNGNNSTSIQYHGISKNDNIKKSVNKLDKQINMADRSLGLQQVVCIFSYGPHIQKMLSILEIFKKGYIKNNKKIYQWNKLTSFDIKREGRNELQEERLKVPILVTLVSDSEIIDLNLHSFTKQ.

The stretch at 51 to 71 (KNDNIKKSVNKLDKQINMADR) forms a coiled coil.

Component of nuclear RNase P and RNase MRP complexes. RNase P consists of an RNA moiety and at least 9 protein subunits including POP1, POP3, POP4, POP5, POP6, POP7, POP8, RPP1 and RPR2. RNase MRP complex consists of an RNA moiety and at least 10 protein subunits including POP1, POP3, POP4, POP5, POP6, POP7, POP8, RMP1, RPP1 and SNM1, many of which are shared with the RNase P complex.

It is found in the nucleus. It catalyses the reaction Endonucleolytic cleavage of RNA, removing 5'-extranucleotides from tRNA precursor.. Functionally, component of ribonuclease P, a protein complex that generates mature tRNA molecules by cleaving their 5'-ends. Also a component of RNase MRP, which cleaves pre-rRNA sequences. The protein is Ribonucleases P/MRP protein subunit POP6 (POP6) of Saccharomyces cerevisiae (strain ATCC 204508 / S288c) (Baker's yeast).